Consider the following 64-residue polypeptide: Large ribosomal subunit protein bL35 (64 aa).

Residues 1-14 are compositionally biased toward basic residues; sequence MKNKTHKGTAKRVK. The tract at residues 1-30 is disordered; sequence MKNKTHKGTAKRVKVTGSGKLVREQANRRH. The span at 21 to 30 shows a compositional bias: basic and acidic residues; the sequence is LVREQANRRH.

It belongs to the bacterial ribosomal protein bL35 family.

This chain is Large ribosomal subunit protein bL35, found in Corynebacterium efficiens (strain DSM 44549 / YS-314 / AJ 12310 / JCM 11189 / NBRC 100395).